A 150-amino-acid polypeptide reads, in one-letter code: Large ribosomal subunit protein uL13 (150 aa).

It belongs to the universal ribosomal protein uL13 family. In terms of assembly, part of the 50S ribosomal subunit.

Its function is as follows. This protein is one of the early assembly proteins of the 50S ribosomal subunit, although it is not seen to bind rRNA by itself. It is important during the early stages of 50S assembly. The chain is Large ribosomal subunit protein uL13 from Persephonella marina (strain DSM 14350 / EX-H1).